The following is a 548-amino-acid chain: MPAKEIAFHQPAREAILRGVQTLAEAVAVTLGPKGRNVVIEKSYGAPTITKDGVTVAKEIELESKFENMGAQMVKEVASQTSDKAGDGTTTATVLARSIYEEGLKLVAAGHNPMDLKRGIDRAVEVVVAHLKSLSTPTKGKDDIAQVGTISANGDTTIGNIIAEAMEKVGKEGVITVEEAKGLETTLDVVEGMQFDRGYSSPYFVTNPDRMEAALEDPYVLVTEKKITAMADLVPVLEQVARSGKPLLIIAEEVEGEALATLVVNKLRGTLHVCAVKAPGFGDRRKEMLKDIATLTGGTVVAEELGIKLEQLGLKDLGRAKRITVDKDNTTIVDGEGKKADIEARIKVIRGQIEESTSEYDREKLQERLAKLVGGVAVINVGAATETEMKEKKARVEDALHATRAAVEEGIVPGGGVAYLRSLADLQKLDVGQGDQRFGVQIVVKALEWPARRIAENAGWDGPVVVNKILEGKGAFGFNAATDTFEDLTKAGVIDPTKVSRTALQNAASVASLLLTTEAMVADKPKKKAAAGGGAGAGMGGGMDDMDY.

Residues 30–33 (TLGP), Lys-51, 87–91 (DGTTT), Gly-415, 479–481 (NAA), and Asp-495 contribute to the ATP site.

It belongs to the chaperonin (HSP60) family. In terms of assembly, forms a cylinder of 14 subunits composed of two heptameric rings stacked back-to-back. Interacts with the co-chaperonin GroES.

It localises to the cytoplasm. The enzyme catalyses ATP + H2O + a folded polypeptide = ADP + phosphate + an unfolded polypeptide.. In terms of biological role, together with its co-chaperonin GroES, plays an essential role in assisting protein folding. The GroEL-GroES system forms a nano-cage that allows encapsulation of the non-native substrate proteins and provides a physical environment optimized to promote and accelerate protein folding. The protein is Chaperonin GroEL 1 of Anaeromyxobacter dehalogenans (strain 2CP-C).